A 447-amino-acid chain; its full sequence is Retinoic acid receptor alpha (447 aa).

Residues 1–79 are modulating; sequence MAGKGNPVPG…PPPPPRVYKP (79 aa). Residues 47 to 61 show a composition bias toward polar residues; it reads TPSPATIETQSTSSE. Residues 47–72 are disordered; it reads TPSPATIETQSTSSEEIVPSPPSPPP. 2 consecutive NR C4-type zinc fingers follow at residues 80 to 100 and 116 to 140; these read CFVC…CEGC and CHRE…LQKC. Positions 80-145 form a DNA-binding region, nuclear receptor; the sequence is CFVCQDKSSG…RLQKCLEVGM (66 aa). Residues 146–174 form a hinge region; the sequence is SKESVRNDRNKKKKDEKKPECIENYVLSP. Positions 175–409 constitute an NR LBD domain; sequence DTEQMINRVR…PLIQEMLENS (235 aa). The 9aaTAD motif lies at 400 to 408; sequence PLIQEMLEN. The interval 407–447 is disordered; that stretch reads ENSEGLESGATGSRPSGAPPGSCSPSLSPSSAQSSPPTQSP. Residues 414-447 are compositionally biased toward low complexity; sequence SGATGSRPSGAPPGSCSPSLSPSSAQSSPPTQSP.

The protein belongs to the nuclear hormone receptor family. NR1 subfamily. In terms of assembly, heterodimer; with an rxr molecule. Binds DNA preferentially as a rar/rxr heterodimer.

It is found in the nucleus. Receptor for retinoic acid. Retinoic acid receptors bind as heterodimers to their target response elements in response to their ligands, all-trans or 9-cis retinoic acid, and regulate gene expression in various biological processes. The rar/rxr heterodimers bind to the retinoic acid response elements (RARE) composed of tandem 5'-AGGTCA-3' sites known as DR1-DR5. In Takifugu rubripes (Japanese pufferfish), this protein is Retinoic acid receptor alpha (rara).